The primary structure comprises 208 residues: N-(5'-phosphoribosyl)anthranilate isomerase (208 aa).

It belongs to the TrpF family.

It carries out the reaction N-(5-phospho-beta-D-ribosyl)anthranilate = 1-(2-carboxyphenylamino)-1-deoxy-D-ribulose 5-phosphate. It functions in the pathway amino-acid biosynthesis; L-tryptophan biosynthesis; L-tryptophan from chorismate: step 3/5. In Lactiplantibacillus plantarum (strain ATCC BAA-793 / NCIMB 8826 / WCFS1) (Lactobacillus plantarum), this protein is N-(5'-phosphoribosyl)anthranilate isomerase.